A 94-amino-acid polypeptide reads, in one-letter code: Integration host factor subunit beta (94 aa).

The protein belongs to the bacterial histone-like protein family. Heterodimer of an alpha and a beta chain.

In terms of biological role, this protein is one of the two subunits of integration host factor, a specific DNA-binding protein that functions in genetic recombination as well as in transcriptional and translational control. The sequence is that of Integration host factor subunit beta from Buchnera aphidicola subsp. Acyrthosiphon pisum (strain 5A).